The primary structure comprises 144 residues: Large ribosomal subunit protein uL15 (144 aa).

The disordered stretch occupies residues 1–58; the sequence is MQLNDLRSAPGARREKLRPGRGIGSGLGKTGGRGHKGQTSRSGGKIAPGFEGGQQPLH. Gly residues predominate over residues 21–31; sequence RGIGSGLGKTG.

Belongs to the universal ribosomal protein uL15 family. In terms of assembly, part of the 50S ribosomal subunit.

Functionally, binds to the 23S rRNA. The protein is Large ribosomal subunit protein uL15 of Azotobacter vinelandii (strain DJ / ATCC BAA-1303).